Here is a 253-residue protein sequence, read N- to C-terminus: Tryptophan synthase alpha chain (253 aa).

Catalysis depends on proton acceptor residues glutamate 47 and aspartate 58.

Belongs to the TrpA family. In terms of assembly, tetramer of two alpha and two beta chains.

The catalysed reaction is (1S,2R)-1-C-(indol-3-yl)glycerol 3-phosphate + L-serine = D-glyceraldehyde 3-phosphate + L-tryptophan + H2O. Its pathway is amino-acid biosynthesis; L-tryptophan biosynthesis; L-tryptophan from chorismate: step 5/5. In terms of biological role, the alpha subunit is responsible for the aldol cleavage of indoleglycerol phosphate to indole and glyceraldehyde 3-phosphate. This Lactococcus lactis subsp. cremoris (strain MG1363) protein is Tryptophan synthase alpha chain.